A 352-amino-acid chain; its full sequence is Mas-related G-protein coupled receptor member X2 (352 aa).

Over 1 to 45 the chain is Extracellular; that stretch reads MEERNISGRDLRVDSNITYWGTNITAVNESNHTGMSFCEVVSCTM. N-linked (GlcNAc...) asparagine glycans are attached at residues asparagine 5, asparagine 16, asparagine 23, asparagine 28, and asparagine 31. The chain crosses the membrane as a helical span at residues 46–66; sequence VFLSLIVALVGLVGNATVLWF. Residues 67 to 75 are Cytoplasmic-facing; sequence LGFQMRRNA. Residues 76 to 96 traverse the membrane as a helical segment; the sequence is FSVYILNLAGADFLFICFQIG. The Extracellular segment spans residues 97–107; the sequence is YCFHMILDIDS. The helical transmembrane segment at 108 to 128 threads the bilayer; that stretch reads IPIEIDLFYLVVLNFPYFCGL. Residues 129 to 155 are Cytoplasmic-facing; the sequence is SILSAISIERCLSVMWPIWYHCQRPRH. A helical membrane pass occupies residues 156-176; it reads TSAVICTLLWVLSLVCSLLEG. Residues 177-195 lie on the Extracellular side of the membrane; it reads KECGFLYYTSDPGWCKTFD. The chain crosses the membrane as a helical span at residues 196–216; it reads LITATWLIVLFVALLGSSLAL. Topologically, residues 217-239 are cytoplasmic; sequence VITIFWGLHKIPVTRLYVAIVFT. A helical membrane pass occupies residues 240–260; sequence VLVFLLFGLPYGIYWFLLVWI. Topologically, residues 261-275 are extracellular; that stretch reads EKFYYVLPCSIYPVT. A helical membrane pass occupies residues 276–296; it reads VFLSCVNSSAKPIIYCLVGSI. At 297 to 347 the chain is on the cytoplasmic side; that stretch reads RHHRFQRKTLKLFLQRAMQDTPEEEECGEMGSSGRSREIKTIWKGLRAALI.

The protein belongs to the G-protein coupled receptor 1 family. Mas subfamily.

It is found in the cell membrane. Orphan receptor. Probably involved in the function of nociceptive neurons. May regulate nociceptor function and/or development, including the sensation or modulation of pain. This chain is Mas-related G-protein coupled receptor member X2 (Mrgprx2), found in Mus musculus (Mouse).